The following is a 253-amino-acid chain: Ubiquinone/menaquinone biosynthesis C-methyltransferase UbiE (253 aa).

S-adenosyl-L-methionine is bound by residues Thr-76, Asp-97, and 125–126; that span reads NA.

This sequence belongs to the class I-like SAM-binding methyltransferase superfamily. MenG/UbiE family.

The enzyme catalyses a 2-demethylmenaquinol + S-adenosyl-L-methionine = a menaquinol + S-adenosyl-L-homocysteine + H(+). It carries out the reaction a 2-methoxy-6-(all-trans-polyprenyl)benzene-1,4-diol + S-adenosyl-L-methionine = a 5-methoxy-2-methyl-3-(all-trans-polyprenyl)benzene-1,4-diol + S-adenosyl-L-homocysteine + H(+). It functions in the pathway quinol/quinone metabolism; menaquinone biosynthesis; menaquinol from 1,4-dihydroxy-2-naphthoate: step 2/2. The protein operates within cofactor biosynthesis; ubiquinone biosynthesis. Methyltransferase required for the conversion of demethylmenaquinol (DMKH2) to menaquinol (MKH2) and the conversion of 2-polyprenyl-6-methoxy-1,4-benzoquinol (DDMQH2) to 2-polyprenyl-3-methyl-6-methoxy-1,4-benzoquinol (DMQH2). In Rhodopseudomonas palustris (strain BisB5), this protein is Ubiquinone/menaquinone biosynthesis C-methyltransferase UbiE.